Consider the following 542-residue polypeptide: Chaperonin GroEL 2 (542 aa).

Residues Thr29–Pro32, Asp86–Thr90, Gly413, Asn477–Ala479, and Asp493 contribute to the ATP site.

The protein belongs to the chaperonin (HSP60) family. As to quaternary structure, forms a cylinder of 14 subunits composed of two heptameric rings stacked back-to-back. Interacts with the co-chaperonin GroES.

It localises to the cytoplasm. The enzyme catalyses ATP + H2O + a folded polypeptide = ADP + phosphate + an unfolded polypeptide.. In terms of biological role, together with its co-chaperonin GroES, plays an essential role in assisting protein folding. The GroEL-GroES system forms a nano-cage that allows encapsulation of the non-native substrate proteins and provides a physical environment optimized to promote and accelerate protein folding. This Frankia alni (strain DSM 45986 / CECT 9034 / ACN14a) protein is Chaperonin GroEL 2.